Reading from the N-terminus, the 237-residue chain is Large ribosomal subunit protein uL1 (237 aa).

Belongs to the universal ribosomal protein uL1 family. Part of the 50S ribosomal subunit.

Functionally, binds directly to 23S rRNA. The L1 stalk is quite mobile in the ribosome, and is involved in E site tRNA release. Protein L1 is also a translational repressor protein, it controls the translation of the L11 operon by binding to its mRNA. The protein is Large ribosomal subunit protein uL1 of Leptothrix cholodnii (strain ATCC 51168 / LMG 8142 / SP-6) (Leptothrix discophora (strain SP-6)).